Consider the following 101-residue polypeptide: Small ribosomal subunit protein uS14 (101 aa).

The segment covering 1 to 10 (MAKKSSIEKN) has biased composition (basic and acidic residues). The interval 1–23 (MAKKSSIEKNNRRRRMNRNAAAK) is disordered. Positions 11 to 23 (NRRRRMNRNAAAK) are enriched in basic residues.

It belongs to the universal ribosomal protein uS14 family. In terms of assembly, part of the 30S ribosomal subunit. Contacts proteins S3 and S10.

Functionally, binds 16S rRNA, required for the assembly of 30S particles and may also be responsible for determining the conformation of the 16S rRNA at the A site. In Nitrobacter winogradskyi (strain ATCC 25391 / DSM 10237 / CIP 104748 / NCIMB 11846 / Nb-255), this protein is Small ribosomal subunit protein uS14.